Reading from the N-terminus, the 5061-residue chain is E3 ubiquitin-protein ligase rnf213-beta (5061 aa).

Positions 1–12 are enriched in basic residues; sequence MTRKRKSGKKGK. The interval 1–334 is disordered; the sequence is MTRKRKSGKK…QRKPSPVRAP (334 aa). Composition is skewed to polar residues over residues 24 to 52 and 75 to 87; these read GGSTSSSTTQKEGAQKGDGSSSSSTTQKD and SDGSTSSSTTNKE. A compositionally biased stretch (basic residues) spans 100–110; sequence LQKKGPQKRKG. 2 stretches are compositionally biased toward polar residues: residues 127-163 and 172-200; these read QTSYPSQARSRSHGQHNISTTESGPLSKEAQTQTSAS and TETVGQASQQTQTEINGNTETAEVSQPPQ. Basic and acidic residues-rich tracts occupy residues 217 to 229 and 236 to 289; these read KGSESDGEKEESV and LSEI…EEPK. Over residues 292–301 the composition is skewed to low complexity; sequence AAAAATGKTG. The segment covering 306–322 has biased composition (polar residues); sequence EQTNQIEANQDSTMESK. ATP-binding positions include 1923–1928, glutamate 2023, aspartate 2074, lysine 2417, and serine 2492; that span reads AVGKSL. Zn(2+) is bound by residues cysteine 3957, cysteine 3960, cysteine 3972, histidine 3974, cysteine 3977, cysteine 3980, cysteine 3993, cysteine 3996, cysteine 4451, and histidine 4455. The segment at 3957–3997 adopts an RING-type zinc-finger fold; sequence CRVCLMELSEPFALPCEHVFCRSCLRRSMEREEAQHCPVCR. The RZ-type zinc finger occupies 4429–4501; sequence MPDDHTSEAK…AYGDYDRTRP (73 aa). Residue cysteine 4462 is the Nucleophile; for E3 ubiquitin-lipopolysaccharide ligase activity of the active site. Zn(2+) contacts are provided by cysteine 4471 and cysteine 4474.

It belongs to the AAA ATPase family.

The protein resides in the cytoplasm. Its subcellular location is the cytosol. It is found in the lipid droplet. The enzyme catalyses S-ubiquitinyl-[E2 ubiquitin-conjugating enzyme]-L-cysteine + [acceptor protein]-L-lysine = [E2 ubiquitin-conjugating enzyme]-L-cysteine + N(6)-ubiquitinyl-[acceptor protein]-L-lysine.. It catalyses the reaction ATP + H2O = ADP + phosphate + H(+). Its pathway is protein modification; protein ubiquitination. Functionally, atypical E3 ubiquitin ligase that can catalyze ubiquitination of both proteins and lipids, and which is involved in various processes, such as lipid metabolism, angiogenesis and cell-autonomous immunity. Acts as a key immune sensor by catalyzing ubiquitination of the lipid A moiety of bacterial lipopolysaccharide (LPS) via its RZ-type zinc-finger: restricts the proliferation of cytosolic bacteria, such as Salmonella, by generating the bacterial ubiquitin coat through the ubiquitination of LPS. Ubiquitination of LPS triggers cell-autonomous immunity, such as antibacterial autophagy, leading to degradation of the microbial invader. Involved in lipid metabolism by regulating fat storage and lipid droplet formation; act by inhibiting the lipolytic process. Also regulates lipotoxicity by inhibiting desaturation of fatty acids. Also acts as an E3 ubiquitin-protein ligase via its RING-type zinc finger. Involved in the non-canonical Wnt signaling pathway in vascular development: acts by mediating ubiquitination and degradation of proteins downstream of rspo3, leading to inhibit the non-canonical Wnt signaling pathway and promoting vessel regression. Also has ATPase activity; ATPase activity is required for ubiquitination of LPS. In Danio rerio (Zebrafish), this protein is E3 ubiquitin-protein ligase rnf213-beta (rnf213b).